We begin with the raw amino-acid sequence, 287 residues long: MGKIVVSVIGAGGKMGTRTSNNLAKKPEEFDLLLVEASEAGIQSIKDRGFEPTPVEEALEKSDVVVFAVPDTLIGKLSAIYVPQLKPGTGFIILDPAAAVARELTLRDDCTFGVAHPCHPSYFLDQDTYEARQDRFGGCGGKQDIVMSKIQGNDDRFAQCVEVAKQMYAPVEHAYVMSSEQIAFLEPTLVELLGATCLYAMAETVDEAVKRGIPKEAAVSFLTGHIYNLSANFLGYIPGNPPVSDACKVAIGLGNRLVMREDWKKIWDDEVLNKVIATMLHPDKPQI.

NAD(+)-binding positions include 13 to 15 (GKM), Glu36, and Asp71. Zn(2+) is bound by residues His116 and Glu186.

It belongs to the ApnO family. Zn(2+) is required as a cofactor.

It catalyses the reaction D-apionate + NAD(+) = 3-oxoisoapionate + NADH + H(+). It participates in carbohydrate metabolism. In terms of biological role, involved in catabolism of D-apiose. Catalyzes the conversion of D-apionate to 3-oxo-isoapionate. This chain is D-apionate oxidoisomerase, found in Blautia hydrogenotrophica (strain DSM 10507 / JCM 14656 / S5a33) (Ruminococcus hydrogenotrophicus).